A 172-amino-acid polypeptide reads, in one-letter code: C-phycocyanin beta chain (172 aa).

An N4-methylasparagine modification is found at asparagine 72. 2 residues coordinate (2R,3E)-phycocyanobilin: cysteine 82 and cysteine 153.

It belongs to the phycobiliprotein family. In terms of assembly, heterodimer of an alpha and a beta subunit, which further assembles into trimers and the trimers into hexamers. The basic functional unit of phycobiliproteins is a ring-shaped hexamer formed from two back-to-back trimers contacting via the alpha chain subunits. The trimers are composed of alpha/beta subunit heterodimers arranged around a three-fold axis of symmetry. The phycoerythrins also contain a gamma subunit which is located in the center of the hexamer. Post-translationally, contains two covalently linked bilin chromophores.

The protein resides in the plastid. The protein localises to the chloroplast thylakoid membrane. In terms of biological role, light-harvesting photosynthetic bile pigment-protein from the phycobiliprotein complex (phycobilisome, PBS). Phycocyanin is the major phycobiliprotein in the PBS rod. This chain is C-phycocyanin beta chain (cpcB), found in Porphyra purpurea (Red seaweed).